We begin with the raw amino-acid sequence, 89 residues long: Bombyxin B-2 (89 aa).

An N-terminal signal peptide occupies residues 1–19 (MKTSVMFMLVFVISLMCSS). 3 cysteine pairs are disulfide-bonded: C29/C75, C41/C88, and C74/C79. Residues 48-66 (SGAQYAPYFWTRQYLGSRG) constitute a propeptide, c peptide like.

This sequence belongs to the insulin family. As to quaternary structure, heterodimer of a B chain and an A chain linked by two disulfide bonds.

It localises to the secreted. Its function is as follows. Brain peptide responsible for activation of prothoracic glands to produce ecdysone in insects. This Bombyx mori (Silk moth) protein is Bombyxin B-2 (BBXB2).